A 497-amino-acid chain; its full sequence is Probable cytosol aminopeptidase (497 aa).

Residues lysine 267 and aspartate 272 each contribute to the Mn(2+) site. Lysine 279 is an active-site residue. The Mn(2+) site is built by aspartate 290, aspartate 349, and glutamate 351. Arginine 353 is a catalytic residue.

It belongs to the peptidase M17 family. Mn(2+) is required as a cofactor.

Its subcellular location is the cytoplasm. It carries out the reaction Release of an N-terminal amino acid, Xaa-|-Yaa-, in which Xaa is preferably Leu, but may be other amino acids including Pro although not Arg or Lys, and Yaa may be Pro. Amino acid amides and methyl esters are also readily hydrolyzed, but rates on arylamides are exceedingly low.. The catalysed reaction is Release of an N-terminal amino acid, preferentially leucine, but not glutamic or aspartic acids.. In terms of biological role, presumably involved in the processing and regular turnover of intracellular proteins. Catalyzes the removal of unsubstituted N-terminal amino acids from various peptides. This chain is Probable cytosol aminopeptidase, found in Pseudomonas putida (strain ATCC 47054 / DSM 6125 / CFBP 8728 / NCIMB 11950 / KT2440).